A 1128-amino-acid polypeptide reads, in one-letter code: MDNPPPTGVAPRHLPPGSVHTGKVTASLSHRRPDSVQDAPPAPVPHRAHGRLREVPHIAGLVLGVFAVACLLWSLSPALRFLTGPPRRFVDDYYFDAPDTNVMWALIVGLLAGAIASRKRIAWWLLVGYLTLFAVANGLRFAAEQNINALVAMIVQVGVVGLLIAAWPEFYTRVRRGAGWKALGVLVGGLAIGCLLGWGLVEVFPGSLPPGWQRPGWAVYRVTAAILVENEHFGGHPRPFVNVLLGLFGAIALLAAVLTLLRSQRAANAMTGLDESAIRGLLEHSDVEDSLGYFATRRDKAVVFAPSGKAAVTYRVELGVCLASGDPVGVREAWPHAIDAWLRLADRFGWTPAVMGASEEGATAYRRAGLSALRLGDEAVLDTRDFSLAGPELRQVRQAANRLRKQGVRVRIRRHREIPSAEFEQIMARADAWRDTETERGFSMALGRLGDPLDADCLLVEAVAADDRVLGMLSLVPWGRTGVSLELMRRDPQGPNGVMELMISQLALNSEQFGITRVSLNFAVFRSVFEEGGRIGAGPVLRLWRGVLLFFSRWWQLEALYRSNVKYQPDWVPRFFLFEERRQLPRVAVASALAEGFLPRLGKDPDASAHTGAQSAVPDTLTGLHADGSPPDWPKPDLLDSGPRRPEQVRVRMAKLDRMTAAGVDAYPVAYPPTHTVAAARRSPRGTTVRVCGRLLRIRDYGGVVFALLRDWSDDIQLVIDRERVGAARSAEFGEYFDLGDLIEVSGQIGRSRSGELSLLAADWRMLGKCLHPLPDKWKGLADPEARVRQRYVDMAINPETRDVLAKRSAVVRSLRESLNSWGYLEVETPILQQVHGGANATPFTTHINAYDLDLYLRIAPELYLKRLCVGGMEKVFELGRTFRNEGVDFSHNPEFTILEAYEAHSDYIRMMHTCRVLIQNAALAANGSMVAMRPGADGALEPVDISGDWPVKTVHGAVSAAVGTEITPRTGVAELRELCDRVGVPYQHGWDEGQIVLEMYEHLVEARTEEPTFYVDFPTSVSPLTRAHRSTPGVTERWDLVAWGVELGTAYSELTDPVEQRRRLTEQSVLAANGDPEAMELDEDFLQALEHAMPPTGGLGMGVDRIVMLITGRSIRETLPFPLVKPR.

The interval 1 to 47 (MDNPPPTGVAPRHLPPGSVHTGKVTASLSHRRPDSVQDAPPAPVPHR) is disordered. The tract at residues 1-632 (MDNPPPTGVA…GLHADGSPPD (632 aa)) is phosphatidylglycerol lysyltransferase. The next 6 membrane-spanning stretches (helical) occupy residues 55-75 (VPHI…LWSL), 97-117 (APDT…AIAS), 121-141 (IAWW…GLRF), 147-167 (INAL…IAAW), 184-204 (GVLV…VEVF), and 240-260 (FVNV…VLTL). Positions 619–644 (DTLTGLHADGSPPDWPKPDLLDSGPR) are disordered. A lysine--tRNA ligase region spans residues 633–1128 (WPKPDLLDSG…TLPFPLVKPR (496 aa)). Over residues 634-644 (PKPDLLDSGPR) the composition is skewed to basic and acidic residues. Asp-1040 and Glu-1047 together coordinate Mg(2+).

The protein in the N-terminal section; belongs to the LPG synthetase family. In the C-terminal section; belongs to the class-II aminoacyl-tRNA synthetase family. Mg(2+) is required as a cofactor.

The protein localises to the cell membrane. The catalysed reaction is tRNA(Lys) + L-lysine + ATP = L-lysyl-tRNA(Lys) + AMP + diphosphate. It catalyses the reaction L-lysyl-tRNA(Lys) + a 1,2-diacyl-sn-glycero-3-phospho-(1'-sn-glycerol) = a 1,2-diacyl-sn-glycero-3-phospho-1'-(3'-O-L-lysyl)-sn-glycerol + tRNA(Lys). In terms of biological role, catalyzes the production of L-lysyl-tRNA(Lys)transfer and the transfer of a lysyl group from L-lysyl-tRNA(Lys) to membrane-bound phosphatidylglycerol (PG), which produces lysylphosphatidylglycerol (LPG), one of the components of the bacterial membrane with a positive net charge. LPG synthesis contributes to the resistance to cationic antimicrobial peptides (CAMPs) and likely protects M.tuberculosis against the CAMPs produced by competiting microorganisms (bacteriocins). In fact, the modification of anionic phosphatidylglycerol with positively charged L-lysine results in repulsion of the peptides. This chain is Lysylphosphatidylglycerol biosynthesis bifunctional protein LysX (lysX), found in Nocardia farcinica (strain IFM 10152).